Reading from the N-terminus, the 340-residue chain is MKLAVIGGDGIGPEVTAEALKVLNAVRDDIETTDYDLGARRYLKNGELLTDEDLASLREHDAILLGAIGAPGSVPPGILERGLLLKMRFALDHHVNLRPSKLYDGVESPLRNPGKIDFVVVREGTEGAYTGNGGAIRVGTAHEIANETSVNTRYGAERVIRYAFELAQSRRKKLTLVHKTNVLVHGGGLWQRTVDEVAKEYPEVAVDYNHIDAATIYLITDPSRFDVIVTDNLFGDILTDEAGAVSGGIGLAASGNIDATGTNPSMFEPVHGSAPDIAGQGIADPTAAILSAAMLLRHLGDEDNAVRIETAIAADVAGRDNSQPISTTEVGDRIVKALQS.

Substrate-binding residues include R88, R98, R122, and D212. Mg(2+) is bound by residues D212, D236, and D240. 272–284 lines the NAD(+) pocket; it reads GSAPDIAGQGIAD.

It belongs to the isocitrate and isopropylmalate dehydrogenases family. LeuB type 2 subfamily. As to quaternary structure, homodimer. Mg(2+) is required as a cofactor. It depends on Mn(2+) as a cofactor.

It is found in the cytoplasm. It catalyses the reaction (2R,3S)-3-isopropylmalate + NAD(+) = 4-methyl-2-oxopentanoate + CO2 + NADH. The protein operates within amino-acid biosynthesis; L-leucine biosynthesis; L-leucine from 3-methyl-2-oxobutanoate: step 3/4. Catalyzes the oxidation of 3-carboxy-2-hydroxy-4-methylpentanoate (3-isopropylmalate) to 3-carboxy-4-methyl-2-oxopentanoate. The product decarboxylates to 4-methyl-2 oxopentanoate. The sequence is that of 3-isopropylmalate dehydrogenase from Corynebacterium glutamicum (strain R).